Here is an 808-residue protein sequence, read N- to C-terminus: Leucine-rich repeat-containing protein 41 (808 aa).

Residues 45–54 form an interaction with Elongin BC complex region; sequence ALFELCGRAV. Phosphoserine occurs at positions 155, 276, and 326. Disordered stretches follow at residues 269–289 and 304–404; these read ASRG…SRRP and TRRK…GSGA. Thr-327 bears the Phosphothreonine mark. The segment covering 357–379 has biased composition (low complexity); sequence PSSAPTAASSSTSSKRAPASSVS. Position 369 is a phosphoserine (Ser-369). Basic residues predominate over residues 383-397; the sequence is PLKRFKRATGKKGPR. LRR repeat units lie at residues 483–503, 514–526, 527–551, 609–631, 632–655, 697–724, and 727–748; these read WVSL…IFRL, AGCR…LSDL, FSPL…VLSI, SGSL…FGLV, LQTL…LADC, NSTL…VFSE, and SSSL…LLEF.

As to quaternary structure, part of an E3 ubiquitin-protein ligase complex with Elongin BC (ELOB and ELOC), RBX1 and CUL5. Component of a probable ECS(LRRC41) complex which contains CUL5, RNF7/RBX2, Elongin BC and LRRC41. Interacts with CUL5, RNF7, ELOB and ELOC.

Its pathway is protein modification; protein ubiquitination. In terms of biological role, probable substrate recognition component of an ECS (Elongin BC-CUL2/5-SOCS-box protein) E3 ubiquitin ligase complex which mediates the ubiquitination and subsequent proteasomal degradation of target proteins. The protein is Leucine-rich repeat-containing protein 41 (Lrrc41) of Rattus norvegicus (Rat).